Here is a 610-residue protein sequence, read N- to C-terminus: Isocitrate dehydrogenase kinase/phosphatase (610 aa).

ATP is bound by residues 359-365 (APGFKGT) and lysine 380. The active site involves aspartate 419.

This sequence belongs to the AceK family.

The protein localises to the cytoplasm. The enzyme catalyses L-seryl-[isocitrate dehydrogenase] + ATP = O-phospho-L-seryl-[isocitrate dehydrogenase] + ADP + H(+). Its function is as follows. Bifunctional enzyme which can phosphorylate or dephosphorylate isocitrate dehydrogenase (IDH) on a specific serine residue. This is a regulatory mechanism which enables bacteria to bypass the Krebs cycle via the glyoxylate shunt in response to the source of carbon. When bacteria are grown on glucose, IDH is fully active and unphosphorylated, but when grown on acetate or ethanol, the activity of IDH declines drastically concomitant with its phosphorylation. The chain is Isocitrate dehydrogenase kinase/phosphatase from Rhodopseudomonas palustris (strain TIE-1).